The primary structure comprises 493 residues: V-type proton ATPase subunit B (493 aa).

It belongs to the ATPase alpha/beta chains family. In terms of assembly, V-ATPase is a heteromultimeric enzyme composed of a peripheral catalytic V1 complex (main components: subunits A, B, C, D, E, and F) attached to an integral membrane V0 proton pore complex (main component: the proteolipid protein).

Its subcellular location is the cytoplasmic vesicle membrane. The protein localises to the endosome membrane. It is found in the contractile vacuole membrane. Vacuolar ATPase is responsible for acidifying a variety of intracellular compartments in eukaryotic cells. The B subunit is non-catalytic but combines with other subunits to form the catalytic complex. V-ATPase is responsible for energizing electrophoretic K(+)/2H(+) antiport by generating a transmembrane voltage of more than 200 mV. This chain is V-type proton ATPase subunit B (vatB), found in Dictyostelium discoideum (Social amoeba).